A 1067-amino-acid polypeptide reads, in one-letter code: Kinesin-like protein KIF11 (1067 aa).

The Kinesin motor domain maps to 18 to 359 (NIQVVVRCRP…LEYANRAKNI (342 aa)). 105-112 (GQTGTGKT) provides a ligand contact to ATP. Residues 365-480 (VNQKLTKRAL…SKEQLAQEAF (116 aa)) adopt a coiled-coil conformation. Threonine 937 carries the phosphothreonine; by CDK1 modification. The residue at position 1046 (serine 1046) is a Phosphoserine; by NEK6. Residues 1048–1067 (IMDEAEQSLPKSKLPLRMQN) are disordered.

Belongs to the TRAFAC class myosin-kinesin ATPase superfamily. Kinesin family. BimC subfamily. Heterotetramer of two heavy and two light chains. Interacts with aurka. Phosphorylation of Thr-937 during mitosis controls the association of this protein with the spindle apparatus. In terms of processing, a subset of this protein primarily localized at the spindle pole is phosphorylated by NEK6 during mitosis. Post-translationally, phosphorylated on a serine residue by aurka.

It localises to the cytoplasm. It is found in the cytoskeleton. The protein localises to the spindle pole. Plus end-directed motor protein required for establishing a bipolar spindle. Associates with both interphase and mitotic spindle microtubules. May be involved in nuclear divisions taking place during the development of unfertilized eggs. Required in non-mitotic cells for transport of secretory proteins from the Golgi complex to the cell surface. This is Kinesin-like protein KIF11 from Xenopus tropicalis (Western clawed frog).